The chain runs to 569 residues: MRWAWLLPLLWAGCLATDGYSLSVTGSVTVQEGLCVFVACQVQYPNSKGPVFGYWFREGANIFSGSPVATNDPQRSVLKEAQGRFYLMGKENSHNCSLDIRDAQKIDTGTYFFRLDGSVKYSFQKSMLSVLVIALTEVPNIQVTSTLVSGNSTKLLCSVPWACEQGTPPIFSWMSSALTSLGHRTTLSSELNLTPRPQDNGTNLTCQVNLPGTGVTVERTQQLSVIYAPQKMTIRVSWGDDTGTKVLQSGASLQIQEGESLSLVCMADSNPPAVLSWERPTQKPFQLSTPAELQLPRAELEDQGKYICQAQNSQGAQTASVSLSIRSLLQLLGPSCSFEGQGLHCSCSSRAWPAPSLRWRLGEGVLEGNSSNGSFTVKSSSAGQWANSSLILSMEFSSNHRLSCEAWSDNRVQRATILLVSGPKVSQAGKSETSRGTVLGAIWGAGLMALLAVCLCLIFFTVKVLRKKSALKVAATKGNHLAKNPASTINSASITSSNIALGYPIQGHLNEPGSQTQKEQPPLATVPDTQKDEPELHYASLSFQGPMPPKPQNTEAMKSVYTEIKIHKC.

The first 16 residues, 1 to 16, serve as a signal peptide directing secretion; it reads MRWAWLLPLLWAGCLA. The Extracellular segment spans residues 17 to 439; that stretch reads TDGYSLSVTG…KSETSRGTVL (423 aa). Positions 18 to 116 constitute an Ig-like V-type domain; that stretch reads DGYSLSVTGS…DTGTYFFRLD (99 aa). 4 disulfide bridges follow: Cys-35–Cys-163, Cys-40–Cys-96, Cys-157–Cys-206, and Cys-265–Cys-308. A glycan (N-linked (GlcNAc...) asparagine) is linked at Asn-95. 3 residues coordinate N-acetylneuraminate: Arg-114, Lys-120, and Ser-122. Ig-like C2-type domains lie at 139–224 and 229–324; these read PNIQ…QQLS and PQKM…VSLS. Asn-151, Asn-200, and Asn-203 each carry an N-linked (GlcNAc...) asparagine glycan. Asn-369, Asn-372, and Asn-387 each carry an N-linked (GlcNAc...) asparagine glycan. The chain crosses the membrane as a helical span at residues 440 to 460; that stretch reads GAIWGAGLMALLAVCLCLIFF. The Cytoplasmic segment spans residues 461–569; sequence TVKVLRKKSA…VYTEIKIHKC (109 aa). The tract at residues 508-556 is disordered; that stretch reads HLNEPGSQTQKEQPPLATVPDTQKDEPELHYASLSFQGPMPPKPQNTEA. The ITIM motif signature appears at 536–541; that stretch reads LHYASL. The SLAM-like motif motif lies at 559–564; that stretch reads SVYTEI.

Belongs to the immunoglobulin superfamily. SIGLEC (sialic acid binding Ig-like lectin) family. Predominantly expressed by immature monocytic/myeloid lineage cells in bone marrow. Also found at lower levels in mature neutrophils and monocytes.

The protein localises to the membrane. In terms of biological role, putative adhesion molecule that mediates sialic-acid dependent binding to cells. Preferentially binds to alpha-2,3-linked sialic acid. The sialic acid recognition site may be masked by cis interactions with sialic acids on the same cell surface. In Mus musculus (Mouse), this protein is Sialic acid-binding Ig-like lectin 5 (Siglec5).